We begin with the raw amino-acid sequence, 417 residues long: Blood group Rh(CE) polypeptide (417 aa).

The next 11 helical transmembrane spans lie at 12–32, 44–64, 77–97, 125–145, 172–192, 203–223, 238–258, 265–285, 287–307, 331–351, and 358–378; these read CLPL…YFFT, LVAS…GLGF, VAFN…LDGF, ISAG…MVLV, FYVF…KPLP, TIPS…WPSV, MFNT…GSSL, ISMT…GTSC, LIPS…ISIG, IFSL…VLHT, and MIGF…VIAL.

Belongs to the ammonium transporter (TC 2.A.49) family. Rh subfamily. In terms of assembly, heterotrimer; a RHCE monomer interacts with a RHAG homodimer. Component of the ankyrin-1 complex in the erythrocyte, composed of ANK1, RHCE, RHAG, SLC4A1, EPB42, GYPA, GYPB and AQP1. Interacts (via the N- and C-terminal) with ANK1 (via ANk 1-5 repeats); mediates the primary membrane attachment site for ANK1. Restricted to tissues or cell lines expressing erythroid characters. Isoform 4g and isoform RhPI-Alpha are expressed in immature erythroblasts but not in mature erythroblasts.

It localises to the membrane. Component of the ankyrin-1 complex, a multiprotein complex involved in the stability and shape of the erythrocyte membrane. Mediates the primary membrane attachment site for ANK1 when associated with RHAG. May participate in the ammonium and carbon dioxide transport through the heterotrimer form. The polypeptide is Blood group Rh(CE) polypeptide (Homo sapiens (Human)).